The primary structure comprises 360 residues: Peptide chain release factor 1 (360 aa).

Gln235 is modified (N5-methylglutamine).

Belongs to the prokaryotic/mitochondrial release factor family. Post-translationally, methylated by PrmC. Methylation increases the termination efficiency of RF1.

The protein localises to the cytoplasm. Peptide chain release factor 1 directs the termination of translation in response to the peptide chain termination codons UAG and UAA. In Leptothrix cholodnii (strain ATCC 51168 / LMG 8142 / SP-6) (Leptothrix discophora (strain SP-6)), this protein is Peptide chain release factor 1.